A 102-amino-acid chain; its full sequence is MSKVLKLTSVTLAASSLAAAGYFYAFDRDSYHYKNASWKRIGDHVQGILDRKEDIAVQRTSSEARDVTVRPIKETMKDLWNEQVRNTAQWVYSFGSNTSTKA.

The helical transmembrane segment at 4–26 (VLKLTSVTLAASSLAAAGYFYAF) threads the bilayer.

The protein belongs to the MICOS complex subunit Mic12 family. Component of the mitochondrial contact site and cristae organizing system (MICOS) complex.

It localises to the mitochondrion inner membrane. In terms of biological role, component of the MICOS complex, a large protein complex of the mitochondrial inner membrane that plays crucial roles in the maintenance of crista junctions, inner membrane architecture, and formation of contact sites to the outer membrane. The chain is MICOS complex subunit MIC12 (AIM5) from Lachancea thermotolerans (strain ATCC 56472 / CBS 6340 / NRRL Y-8284) (Yeast).